Reading from the N-terminus, the 516-residue chain is Endo-acting ulvan lyase (516 aa).

Positions 1–24 (MLEKTTLKNIILIHFLMFLAVVTA) are cleaved as a signal peptide. A disulfide bond links Cys-38 and Cys-65. The Ca(2+) site is built by Gly-42, Asn-44, Asp-62, Ser-64, Ala-67, and Asn-68. Tyr-138 is a substrate binding site. The Proton acceptor role is filled by Lys-143. Residues 191-195 (EGDGR) and 260-263 (YRVK) each bind substrate. Catalysis depends on Tyr-260, which acts as the Proton donor/acceptor. The segment at 289–429 (PIGDVYKLKN…VWKAIAVESL (141 aa)) is ulvan-binding domain. A propeptide spans 430–516 (SVDENAILAS…NKYHKKLIVK (87 aa)) (removed by the type IX secretion system (T9SS)).

The protein belongs to the polysaccharide lyase 28 family. Ca(2+) serves as cofactor.

It is found in the secreted. Ulvan lyase involved in ulvan degradation. Ulvan is the main polysaccharide component of the Ulvales (green seaweed) cell wall. It is composed of disaccharide building blocks comprising 3-sulfated rhamnose (Rha3S) linked to D-glucuronic acid (GlcA), L-iduronic acid (IduA), or D-xylose (Xyl). Ulvan lyase catalyzes the endolytic cleavage of the glycosidic bond between Rha3S and the uronic acids GlcA or IduA, producing oligosaccharides that have unsaturated 4-deoxy-L-threo-hex-4-enopyranosiduronic acid (deltaUA) at the non-reducing end. This results eventually in the degradation of the ulvan polysaccharide into deltaUA-Rha3S disaccharides and deltaUA-Rha3S-Xyl-Rha3S tetrasaccharides. This Formosa agariphila (strain DSM 15362 / KCTC 12365 / LMG 23005 / KMM 3901 / M-2Alg 35-1) protein is Endo-acting ulvan lyase.